A 133-amino-acid chain; its full sequence is Small ribosomal subunit protein uS8 (133 aa).

A disordered region spans residues 1–29; that stretch reads MANHDPISDMLTRIRNASEKRHETTRIPA. A compositionally biased stretch (basic and acidic residues) spans 16–25; sequence NASEKRHETT.

Belongs to the universal ribosomal protein uS8 family. In terms of assembly, part of the 30S ribosomal subunit. Contacts proteins S5 and S12.

In terms of biological role, one of the primary rRNA binding proteins, it binds directly to 16S rRNA central domain where it helps coordinate assembly of the platform of the 30S subunit. The polypeptide is Small ribosomal subunit protein uS8 (Prochlorococcus marinus (strain MIT 9211)).